Consider the following 320-residue polypeptide: 4-hydroxy-3-methylbut-2-enyl diphosphate reductase (320 aa).

Cys-13 lines the [4Fe-4S] cluster pocket. His-41 and His-75 together coordinate (2E)-4-hydroxy-3-methylbut-2-enyl diphosphate. Dimethylallyl diphosphate is bound by residues His-41 and His-75. Residues His-41 and His-75 each coordinate isopentenyl diphosphate. Cys-97 serves as a coordination point for [4Fe-4S] cluster. His-125 is a (2E)-4-hydroxy-3-methylbut-2-enyl diphosphate binding site. His-125 lines the dimethylallyl diphosphate pocket. His-125 provides a ligand contact to isopentenyl diphosphate. The Proton donor role is filled by Glu-127. Residue Thr-168 participates in (2E)-4-hydroxy-3-methylbut-2-enyl diphosphate binding. [4Fe-4S] cluster is bound at residue Cys-225. Residues Ser-253, Ser-254, Asn-255, and Ser-302 each contribute to the (2E)-4-hydroxy-3-methylbut-2-enyl diphosphate site. 4 residues coordinate dimethylallyl diphosphate: Ser-253, Ser-254, Asn-255, and Ser-302. Ser-253, Ser-254, Asn-255, and Ser-302 together coordinate isopentenyl diphosphate.

The protein belongs to the IspH family. [4Fe-4S] cluster serves as cofactor.

The enzyme catalyses isopentenyl diphosphate + 2 oxidized [2Fe-2S]-[ferredoxin] + H2O = (2E)-4-hydroxy-3-methylbut-2-enyl diphosphate + 2 reduced [2Fe-2S]-[ferredoxin] + 2 H(+). It carries out the reaction dimethylallyl diphosphate + 2 oxidized [2Fe-2S]-[ferredoxin] + H2O = (2E)-4-hydroxy-3-methylbut-2-enyl diphosphate + 2 reduced [2Fe-2S]-[ferredoxin] + 2 H(+). Its pathway is isoprenoid biosynthesis; dimethylallyl diphosphate biosynthesis; dimethylallyl diphosphate from (2E)-4-hydroxy-3-methylbutenyl diphosphate: step 1/1. It functions in the pathway isoprenoid biosynthesis; isopentenyl diphosphate biosynthesis via DXP pathway; isopentenyl diphosphate from 1-deoxy-D-xylulose 5-phosphate: step 6/6. Its function is as follows. Catalyzes the conversion of 1-hydroxy-2-methyl-2-(E)-butenyl 4-diphosphate (HMBPP) into a mixture of isopentenyl diphosphate (IPP) and dimethylallyl diphosphate (DMAPP). Acts in the terminal step of the DOXP/MEP pathway for isoprenoid precursor biosynthesis. The chain is 4-hydroxy-3-methylbut-2-enyl diphosphate reductase from Chlorobium luteolum (strain DSM 273 / BCRC 81028 / 2530) (Pelodictyon luteolum).